The sequence spans 426 residues: Histidine--tRNA ligase (426 aa).

It belongs to the class-II aminoacyl-tRNA synthetase family. In terms of assembly, homodimer.

It localises to the cytoplasm. The enzyme catalyses tRNA(His) + L-histidine + ATP = L-histidyl-tRNA(His) + AMP + diphosphate + H(+). This is Histidine--tRNA ligase from Prochlorococcus marinus (strain AS9601).